A 427-amino-acid chain; its full sequence is Septin-6 (427 aa).

The residue at position 2 (Ala2) is an N-acetylalanine. Ser27 bears the Phosphoserine mark. In terms of domain architecture, Septin-type G spans 39–305; it reads QGFCFNILCV…ELYRRCKLEE (267 aa). The segment at 49–56 is G1 motif; the sequence is GETGLGKS. GTP is bound by residues 49–56, Gly104, 185–193, Gly239, and Arg254; these read GETGLGKS and KSDAISKSE. Residues 101 to 104 are G3 motif; that stretch reads STVG. The G4 motif stretch occupies residues 184–187; that stretch reads AKSD. Residues 321–416 are a coiled coil; sequence QETYEAKRNE…QSQGSQAGGS (96 aa). Lys367 carries the post-translational modification N6-acetyllysine. The tract at residues 405 to 427 is disordered; it reads LLQSQGSQAGGSQTLKRDKEKKN. Over residues 407–417 the composition is skewed to low complexity; that stretch reads QSQGSQAGGSQ. Ser416 is subject to Phosphoserine. Thr418 is subject to Phosphothreonine.

The protein belongs to the TRAFAC class TrmE-Era-EngA-EngB-Septin-like GTPase superfamily. Septin GTPase family. In terms of assembly, septins polymerize into heterooligomeric protein complexes that form filaments, and associate with cellular membranes, actin filaments and microtubules. GTPase activity is required for filament formation. Filaments are assembled from asymmetrical heterotrimers, composed of SEPTIN2, SEPTIN6 and SEPTIN7 that associate head-to-head to form a hexameric unit. Within the trimer, directly interacts with SEPTIN2 and SEPTIN7. Also interacts with SEPTIN9 and SEPTIN12. Interaction with SEPTIN12 alters filament structure. Component of a septin core octameric complex consisting of SEPTIN12, SEPTIN7, SEPTIN6 and SEPTIN2 or SEPTIN4 in the order 12-7-6-2-2-6-7-12 or 12-7-6-4-4-6-7-12 and located in the sperm annulus. Interacts with SOCS7. Interacts with HNRNPA1.

The protein localises to the cytoplasm. The protein resides in the cytoskeleton. It is found in the spindle. It localises to the chromosome. Its subcellular location is the centromere. The protein localises to the kinetochore. The protein resides in the cleavage furrow. It is found in the midbody. It localises to the cell projection. Its subcellular location is the cilium. The protein localises to the flagellum. In terms of biological role, filament-forming cytoskeletal GTPase. Required for normal organization of the actin cytoskeleton. Involved in cytokinesis. Forms a filamentous structure with SEPTIN12, SEPTIN6, SEPTIN2 and probably SEPTIN4 at the sperm annulus which is required for the structural integrity and motility of the sperm tail during postmeiotic differentiation. This is Septin-6 from Bos taurus (Bovine).